A 305-amino-acid polypeptide reads, in one-letter code: Achromobactin-binding periplasmic protein (305 aa).

The N-terminal stretch at 1–29 is a signal peptide; sequence MNEYLVSRRRLLRLSLSLLPLGLGRPALA. Residues 37–302 enclose the Fe/B12 periplasmic-binding domain; the sequence is RVITLFQGAT…DIARVTGIAG (266 aa).

The protein belongs to the bacterial solute-binding protein 8 family.

It is found in the periplasm. Functionally, binds citrate- or chloride-dependent Fe(3+); part of the binding-protein-dependent transport system CbrABCD for uptake of the siderophore achromobactin. The chain is Achromobactin-binding periplasmic protein (cbrA) from Dickeya dadantii (strain 3937) (Erwinia chrysanthemi (strain 3937)).